The chain runs to 76 residues: cAMP-dependent protein kinase inhibitor alpha (76 aa).

N-acetylthreonine is present on Thr-2. The disordered stretch occupies residues 49-76 (KTEGEEDAQRSSTEQSGEAQGEAAKSES).

The protein belongs to the PKI family.

Its function is as follows. Extremely potent competitive inhibitor of cAMP-dependent protein kinase activity, this protein interacts with the catalytic subunit of the enzyme after the cAMP-induced dissociation of its regulatory chains. This is cAMP-dependent protein kinase inhibitor alpha (PKIA) from Homo sapiens (Human).